Reading from the N-terminus, the 988-residue chain is Echinoderm microtubule-associated protein-like 4 (988 aa).

N-acetylmethionine is present on Met-1. Residues 1 to 260 (MDGFAGSLDD…IPSDVDNYDD (260 aa)) form a microtubule-binding region. Phosphoserine occurs at positions 7, 13, 16, 61, and 79. The stretch at 14-63 (AASTSDVQDRLSALESRVQQQEDEITVLKAALADVLRRLAISEDHVASVK) forms a coiled coil. Thr-96 carries the phosphothreonine modification. Residues 106-194 (TLSSAAKSGT…WENSDDSRNK (89 aa)) form a disordered region. The segment covering 114 to 134 (GTEKKKEKPQGQREKKEDSHS) has biased composition (basic and acidic residues). A Phosphoserine; by NEK7 modification is found at Ser-134. Residues 137 to 155 (QSPQIRASPSPQPSSQPLQ) are compositionally biased toward low complexity. Position 144 is a phosphoserine; by NEK6 (Ser-144). Ser-146 carries the post-translational modification Phosphoserine; by NEK7. Polar residues predominate over residues 156-168 (INRQTPESKSSAP). Phosphoserine is present on Ser-171. A compositionally biased stretch (basic and acidic residues) spans 176–193 (PTAEKSHNSWENSDDSRN). Ser-200 is modified (phosphoserine). Phosphothreonine is present on Thr-201. Tyr-237 is modified (phosphotyrosine). Phosphothreonine is present on Thr-248. WD repeat units lie at residues 270 to 308 (LKLEWVYGYRGKDCRANVYLLPTGEIVYFIASVVVLFNY), 312 to 359 (TQRH…VWDS), 367 to 407 (VIGL…VWDW), 414 to 449 (AEIKTTNEVVLAVEFHPTDANTIITCGKSHIFFWTW), 456 to 495 (RKQGIFGKYEKPKFVQCLAFLGNGDVLTGDSGGVMLIWSK), 511 to 549 (QINRQIKAHDGSVFTLCQMRNGMLLTGGGKDRKIILWDH), 554 to 590 (EREIEVPDQYGTIRAVAEGRAEQFLVGTSRNFILRGT), 593 to 632 (DGFQIEVQGHRDELWGLATHPFKDLLLTCAQDRQVCMWNS), 636 to 673 (RLEWTRLVDEPGHCADFHPSGTVVAIGTHSGRWFVLDA), 679 to 715 (VSIHTDGNEQLSVMRYSVDGTLLAVGSHDNFIYLYTV), 722 to 761 (YSRYGKCTGHSSYITHLDWSPDNKHIMSNSGDYEILYWDI), 771 to 829 (RSDC…LFQY), and 836 to 875 (APSHKYSAHSSHVTNVSFTHNDSHLISTGGKDMSIIQWKL). At Thr-620 the chain carries Phosphothreonine; by NEK6 and NEK7. The disordered stretch occupies residues 887 to 988 (ITDASVTKTP…EEERGITPLC (102 aa)). Polar residues predominate over residues 890 to 904 (ASVTKTPASSSETAR). Phosphoserine occurs at positions 906, 908, and 914. A compositionally biased stretch (polar residues) spans 927 to 939 (MGSSPTLVENSLE). Positions 944–953 (PSEEQSEWGS) are enriched in acidic residues.

It belongs to the WD repeat EMAP family. As to quaternary structure, homotrimer; self-association is mediated by the N-terminal coiled coil. Interacts (via WD repeats) with NUDC. Interacts with alpha- and beta-tubulin during mitosis. Post-translationally, phosphorylated during mitosis. Phosphorylation at Ser-144 and Ser-146 promotes its dissociation from microtubules during mitosis which is required for efficient chromosome congression.

The protein resides in the cytoplasm. It is found in the cytoskeleton. The protein localises to the spindle. Its subcellular location is the microtubule organizing center. It localises to the midbody. In terms of biological role, essential for the stability of microtubules (MTs). Essential for the formation of MTs. Required for the organization of the mitotic spindle and for the proper attachment of kinetochores to MTs. Promotes the recruitment of NUDC to the mitotic spindle for mitotic progression. The chain is Echinoderm microtubule-associated protein-like 4 (Eml4) from Mus musculus (Mouse).